The chain runs to 273 residues: Putative phosphoenolpyruvate synthase regulatory protein (273 aa).

G154–T161 is a binding site for ADP.

This sequence belongs to the pyruvate, phosphate/water dikinase regulatory protein family. PSRP subfamily.

It catalyses the reaction [pyruvate, water dikinase] + ADP = [pyruvate, water dikinase]-phosphate + AMP + H(+). The catalysed reaction is [pyruvate, water dikinase]-phosphate + phosphate + H(+) = [pyruvate, water dikinase] + diphosphate. Its function is as follows. Bifunctional serine/threonine kinase and phosphorylase involved in the regulation of the phosphoenolpyruvate synthase (PEPS) by catalyzing its phosphorylation/dephosphorylation. The polypeptide is Putative phosphoenolpyruvate synthase regulatory protein (Neisseria meningitidis serogroup B (strain ATCC BAA-335 / MC58)).